The chain runs to 246 residues: Uridylate kinase (246 aa).

Lys10–Gly13 serves as a coordination point for ATP. Gly52 lines the UMP pocket. ATP contacts are provided by Gly53 and Arg57. UMP is bound by residues Asp72 and Thr133–Thr140. ATP-binding residues include Thr160, Tyr166, and Asp169.

It belongs to the UMP kinase family. Homohexamer.

It localises to the cytoplasm. The enzyme catalyses UMP + ATP = UDP + ADP. It participates in pyrimidine metabolism; CTP biosynthesis via de novo pathway; UDP from UMP (UMPK route): step 1/1. Its activity is regulated as follows. Inhibited by UTP. Catalyzes the reversible phosphorylation of UMP to UDP. This is Uridylate kinase from Halorhodospira halophila (strain DSM 244 / SL1) (Ectothiorhodospira halophila (strain DSM 244 / SL1)).